A 206-amino-acid chain; its full sequence is Transmembrane 4 L6 family member 19 (206 aa).

Residues 1-16 are Cytoplasmic-facing; sequence MLSFSRVVNCSRTCSR. A helical membrane pass occupies residues 17 to 37; the sequence is FLGLSLGTASLCAAGANIALL. The Extracellular portion of the chain corresponds to 38-54; sequence FPNWDVTYLMRGLIGKH. A helical membrane pass occupies residues 55 to 75; sequence AMLGSGLWGGGLMVLLAATLI. At 76 to 89 the chain is on the cytoplasmic side; sequence SMTGSFSKSAPCLQ. A helical membrane pass occupies residues 90-110; it reads VLIALLSSGLALLGAVICFVT. Residues 111–171 are Extracellular-facing; that stretch reads SGVALKDGPF…PSKAVVWHVA (61 aa). N-linked (GlcNAc...) asparagine glycosylation is present at Asn129. The helical transmembrane segment at 172 to 192 threads the bilayer; the sequence is FFSILLCISLLQLLLVAIHLV. Residues 182–192 are important for homodimerization; that stretch reads LQLLLVAIHLV. Over 193-206 the chain is Cytoplasmic; the sequence is NSILGLFCSFCEKH.

Belongs to the L6 tetraspanin family. In terms of assembly, may form homodimers and homooligomers. Interacts with integrins ITGAV and ITGB3. Interacts with components of members of the V0 complex of vacuolar(H+)-ATPase (V-ATPase), including ATP6V0B and ATP6V0D2; this interaction inhibits V1-V0 complex assembly. In terms of tissue distribution, predominantly expressed in osteoclasts (at protein level). Also expressed in white adipose tissue, as well as in bone marrow-derived macrophages.

The protein localises to the lysosome membrane. It localises to the cytoplasm. It is found in the cytoskeleton. The protein resides in the cell projection. Its subcellular location is the filopodium. Functionally, negatively regulates vacuolar (H+)-ATPase (V-ATPase) activity by interacting with members of V-ATPase V0 complex and hence inhibiting V1-V0 assembly. Required for multinucleation during osteoclast differentiation. The chain is Transmembrane 4 L6 family member 19 (Tm4sf19) from Mus musculus (Mouse).